A 363-amino-acid polypeptide reads, in one-letter code: Eukaryotic translation initiation factor 3 subunit H (363 aa).

Positions V13 to F163 constitute an MPN domain.

Belongs to the eIF-3 subunit H family. In terms of assembly, component of the eukaryotic translation initiation factor 3 (eIF-3) complex.

The protein resides in the cytoplasm. Its function is as follows. Component of the eukaryotic translation initiation factor 3 (eIF-3) complex, which is involved in protein synthesis of a specialized repertoire of mRNAs and, together with other initiation factors, stimulates binding of mRNA and methionyl-tRNAi to the 40S ribosome. The eIF-3 complex specifically targets and initiates translation of a subset of mRNAs involved in cell proliferation. The chain is Eukaryotic translation initiation factor 3 subunit H from Pyricularia oryzae (strain 70-15 / ATCC MYA-4617 / FGSC 8958) (Rice blast fungus).